A 607-amino-acid polypeptide reads, in one-letter code: Elongation factor 4 (607 aa).

Positions 11–193 (SKIRNFSIIA…QIVEKVPAPA (183 aa)) constitute a tr-type G domain. Residues 23–28 (DHGKST) and 140–143 (NKID) each bind GTP.

This sequence belongs to the TRAFAC class translation factor GTPase superfamily. Classic translation factor GTPase family. LepA subfamily.

It localises to the cell membrane. The enzyme catalyses GTP + H2O = GDP + phosphate + H(+). Its function is as follows. Required for accurate and efficient protein synthesis under certain stress conditions. May act as a fidelity factor of the translation reaction, by catalyzing a one-codon backward translocation of tRNAs on improperly translocated ribosomes. Back-translocation proceeds from a post-translocation (POST) complex to a pre-translocation (PRE) complex, thus giving elongation factor G a second chance to translocate the tRNAs correctly. Binds to ribosomes in a GTP-dependent manner. This chain is Elongation factor 4, found in Bacillus cereus (strain ATCC 14579 / DSM 31 / CCUG 7414 / JCM 2152 / NBRC 15305 / NCIMB 9373 / NCTC 2599 / NRRL B-3711).